We begin with the raw amino-acid sequence, 337 residues long: Oligopeptide transport ATP-binding protein OppD (337 aa).

Residues 20-269 enclose the ABC transporter domain; that stretch reads LNVKDLRVTF…PVHPYSIGLL (250 aa). 56 to 63 provides a ligand contact to ATP; the sequence is GESGSGKS.

This sequence belongs to the ABC transporter superfamily. The complex is composed of two ATP-binding proteins (OppD and OppF), two transmembrane proteins (OppB and OppC) and a solute-binding protein (OppA or MppA).

The protein localises to the cell inner membrane. The enzyme catalyses a [peptide](out) + ATP + H2O = a [peptide](in) + ADP + phosphate + H(+). It catalyses the reaction L-alanyl-gamma-D-glutamyl-meso-2,6-diaminopimelate(out) + ATP + H2O = L-alanyl-gamma-D-glutamyl-meso-2,6-diaminopimelate(in) + ADP + phosphate + H(+). In terms of biological role, part of the ABC transporter complex OppABCDF involved in the uptake of oligopeptides and of the ABC transporter complex MppA-OppBCDF involved in the uptake of the cell wall murein tripeptide L-alanyl-gamma-D-glutamyl-meso-diaminopimelate. Probably responsible for energy coupling to the transport system. Plays an important nutritional role and is involved in the recycling of cell wall peptides. The polypeptide is Oligopeptide transport ATP-binding protein OppD (oppD) (Escherichia coli (strain K12)).